Reading from the N-terminus, the 583-residue chain is MKKSYSGVTRTSSGRLRRLADPTGPALKRSFEVEEIEPPNSTPPRRVQTPLLRATVASSSQKFQDLGVKNSEPAARLVDSLSQRSPKPSLRRVELAGAKAPEPMSRRTEISIDISSKQVESTASAAGPSRFGLKRAEVLGHKTPEPVPRRTEITIVKPQESVLRRVETPASKIPEGSAVPATDAAPKRVEIQVPKPAEAPNCPLPSQTLENSEAPMSQLQSRLEPRPSVAEVPYRNQEDSEVTPSCVGDMADNPRDAMLKQAPASRNEKAPMEFGYVGIDSILEQMRRKAMKQGFEFNIMVVGQSGLGKSTLINTLFKSKISRKSVQPTSEERIPKTIEIKSITHDIEEKGVRMKLTVIDTPGFGDHINNENCWQPIMKFINDQYEKYLQEEVNINRKKRIPDTRVHCCLYFIPATGHSLRPLDIEFMKRLSKVVNIVPVIAKADTLTLEERVYFKQRITADLLSNGIDVYPQKEFDEDAEDRLVNEKFREMIPFAVVGSDHEYQVNGKRILGRKTKWGTIEVENTTHCEFAYLRDLLIRTHMQNIKDITSNIHFEAYRVKRLNEGNSAMANGIEKEPEAQEM.

M1 is modified (N-acetylmethionine). A compositionally biased stretch (polar residues) spans 1–14; it reads MKKSYSGVTRTSSG. Positions 1 to 49 are disordered; that stretch reads MKKSYSGVTRTSSGRLRRLADPTGPALKRSFEVEEIEPPNSTPPRRVQT. S30 is subject to Phosphoserine. Phosphothreonine occurs at positions 42 and 49. The residue at position 62 (K62) is an N6-acetyllysine. Positions 79 to 105 are disordered; sequence DSLSQRSPKPSLRRVELAGAKAPEPMS. Phosphoserine is present on residues S82, S85, and S89. T143 carries the phosphothreonine modification. The tract at residues 166 to 252 is disordered; sequence VETPASKIPE…TPSCVGDMAD (87 aa). The span at 204–221 shows a compositional bias: polar residues; it reads LPSQTLENSEAPMSQLQS. Y276 carries the post-translational modification Phosphotyrosine. The region spanning 293–565 is the Septin-type G domain; it reads QGFEFNIMVV…EAYRVKRLNE (273 aa). The interval 303–310 is G1 motif; the sequence is GQSGLGKS. Residue 303–310 coordinates GTP; it reads GQSGLGKS. Residues S325 and S330 each carry the phosphoserine modification. GTP-binding positions include T337, G363, 443-451, G499, and R514; that span reads KADTLTLEE. The tract at residues 360 to 363 is G3 motif; the sequence is DTPG. Residues 442 to 445 are G4 motif; that stretch reads AKAD.

It belongs to the TRAFAC class TrmE-Era-EngA-EngB-Septin-like GTPase superfamily. Septin GTPase family. In terms of assembly, septins polymerize into heterooligomeric protein complexes that form filaments, and associate with cellular membranes, actin filaments, and microtubules. GTPase activity is required for filament formation. Interacts with SEPTIN2, SEPTIN6, SEPTIN7, SEPTIN11 and SEPTIN14. Interacts with RTKN and ARHGEF18. Expressed in all tissues examined except muscle. Isoforms are differentially expressed in testes, kidney, liver, heart, spleen and brain.

It localises to the cytoplasm. The protein resides in the cytoskeleton. Functionally, filament-forming cytoskeletal GTPase. May play a role in cytokinesis (Potential). The sequence is that of Septin-9 from Mus musculus (Mouse).